A 191-amino-acid chain; its full sequence is Threonylcarbamoyl-AMP synthase (191 aa).

The YrdC-like domain maps to 7 to 191; sequence QSELNDALKI…FHASTGKRLR (185 aa).

This sequence belongs to the SUA5 family. TsaC subfamily.

It is found in the cytoplasm. The enzyme catalyses L-threonine + hydrogencarbonate + ATP = L-threonylcarbamoyladenylate + diphosphate + H2O. Functionally, required for the formation of a threonylcarbamoyl group on adenosine at position 37 (t(6)A37) in tRNAs that read codons beginning with adenine. Catalyzes the conversion of L-threonine, HCO(3)(-)/CO(2) and ATP to give threonylcarbamoyl-AMP (TC-AMP) as the acyladenylate intermediate, with the release of diphosphate. The protein is Threonylcarbamoyl-AMP synthase of Psychromonas ingrahamii (strain DSM 17664 / CCUG 51855 / 37).